Reading from the N-terminus, the 451-residue chain is Cobyrinate a,c-diamide synthase (451 aa).

A GATase cobBQ-type domain is found at 246–437 (KIGVAYDEVF…VHTHVAAMPN (192 aa)). Cys-328 functions as the Nucleophile in the catalytic mechanism.

This sequence belongs to the CobB/CbiA family. Requires Mg(2+) as cofactor.

The catalysed reaction is cob(II)yrinate + 2 L-glutamine + 2 ATP + 2 H2O = cob(II)yrinate a,c diamide + 2 L-glutamate + 2 ADP + 2 phosphate + 2 H(+). It catalyses the reaction Ni-sirohydrochlorin + 2 L-glutamine + 2 ATP + 2 H2O = Ni-sirohydrochlorin a,c-diamide + 2 L-glutamate + 2 ADP + 2 phosphate + 2 H(+). Its pathway is cofactor biosynthesis; adenosylcobalamin biosynthesis; cob(II)yrinate a,c-diamide from sirohydrochlorin (anaerobic route): step 10/10. Catalyzes the ATP-dependent amidation of the two carboxylate groups at positions a and c of cobyrinate, using either L-glutamine or ammonia as the nitrogen source. Involved in the biosynthesis of the unique nickel-containing tetrapyrrole coenzyme F430, the prosthetic group of methyl-coenzyme M reductase (MCR), which plays a key role in methanogenesis and anaerobic methane oxidation. Catalyzes the ATP-dependent amidation of the two carboxylate groups at positions a and c of Ni-sirohydrochlorin, using L-glutamine or ammonia as the nitrogen source. The protein is Cobyrinate a,c-diamide synthase of Methanobrevibacter smithii (strain ATCC 35061 / DSM 861 / OCM 144 / PS).